The following is a 229-amino-acid chain: C-&gt;U-editing enzyme APOBEC-1 (229 aa).

One can recognise a CMP/dCMP-type deaminase domain in the interval 10–134 (VDPTLRRRIE…PRNRQGLRDL (125 aa)). Zn(2+) is bound at residue His61. Catalysis depends on Glu63, which acts as the Proton donor. The Zn(2+) site is built by Cys93 and Cys96.

It belongs to the cytidine and deoxycytidylate deaminase family. In terms of assembly, homodimer. Interacts with A1CF; form an mRNA editing complex. Interacts with RBM47; form an mRNA editing complex. Found in a complex with CELF2/CUGBP2 and A1CF. Interacts with HNRPAB. Interacts with SYNCRIP. Zn(2+) serves as cofactor. In terms of tissue distribution, expressed in the liver as well as small intestine.

It is found in the cytoplasm. The protein resides in the nucleus. The catalysed reaction is a cytidine in mRNA + H2O + H(+) = a uridine in mRNA + NH4(+). It catalyses the reaction cytidine(6666) in apoB mRNA + H2O + H(+) = uridine(6666) in apoB mRNA + NH4(+). Its function is as follows. Cytidine deaminase catalyzing the cytidine to uridine postranscriptional editing of a variety of mRNAs. Form complexes with cofactors that confer differential editing activity and selectivity. Responsible for the postranscriptional editing of a CAA codon for Gln to a UAA codon for stop in the apolipoprotein B mRNA. Also involved in CGA (Arg) to UGA (Stop) editing in the NF1 mRNA. May also play a role in the epigenetic regulation of gene expression by participating in DNA demethylation. This chain is C-&gt;U-editing enzyme APOBEC-1, found in Rattus norvegicus (Rat).